A 315-amino-acid chain; its full sequence is Pantothenate kinase (315 aa).

Position 94-101 (glycine 94–serine 101) interacts with ATP.

Belongs to the prokaryotic pantothenate kinase family.

Its subcellular location is the cytoplasm. The catalysed reaction is (R)-pantothenate + ATP = (R)-4'-phosphopantothenate + ADP + H(+). It functions in the pathway cofactor biosynthesis; coenzyme A biosynthesis; CoA from (R)-pantothenate: step 1/5. This is Pantothenate kinase from Citrobacter koseri (strain ATCC BAA-895 / CDC 4225-83 / SGSC4696).